Here is an 86-residue protein sequence, read N- to C-terminus: Weak neurotoxin 9 (86 aa).

Residues 1-21 (MKTLLLTLVVVTIVCLDLGYT) form the signal peptide. 5 disulfides stabilise this stretch: cysteine 24-cysteine 45, cysteine 27-cysteine 32, cysteine 38-cysteine 63, cysteine 67-cysteine 78, and cysteine 79-cysteine 84.

It belongs to the three-finger toxin family. Ancestral subfamily. Orphan group II sub-subfamily. In terms of tissue distribution, expressed by the venom gland.

The protein resides in the secreted. In terms of biological role, binds with low affinity to muscular (alpha-1-beta-1-delta-epsilon/CHRNA1-CHRNB1-CHRND-CHRNE) and very low affinity to neuronal (alpha-7/CHRNA7) nicotinic acetylcholine receptor (nAChR). This Naja sputatrix (Malayan spitting cobra) protein is Weak neurotoxin 9.